Consider the following 418-residue polypeptide: Deubiquitinase and deneddylase Dub1 (418 aa).

Positions 1–10 (MLSPTNSISK) are enriched in polar residues. Residues 1-23 (MLSPTNSISKTAPVPPQDSSKPV) are disordered. A helical membrane pass occupies residues 40–60 (TALAVLLVVVTLGLILLFYSF). A disordered region spans residues 72 to 144 (TRPSTKEQPT…PLPPKAPKPV (73 aa)). The span at 86-141 (VPLPSPPLAVPRPSTPPPPVISRPSTPPAPTPAISPPSTPSAPKPSTPPPLPPKAP) shows a compositional bias: pro residues. Catalysis depends on residues H288, D305, and C358.

Belongs to the peptidase C48 family.

Its subcellular location is the secreted. It is found in the host cell. It localises to the membrane. Effector proteins function to alter host cell physiology and promote bacterial survival in host tissues. This protease possesses deubiquitinating and deneddylating activities. The protein is Deubiquitinase and deneddylase Dub1 (cdu1) of Chlamydia trachomatis serovar B (strain Jali20/OT).